A 141-amino-acid polypeptide reads, in one-letter code: MDRPKPFSVQQLADTLCIPLVDILLPCRFCQRFLTYIELVSLNRKGLQLIWTEEDFVFACCSSCAFATAQFEFSNFYEQSVCSWEIEIVEQKPVGDIIIRCKFCLKKLDLIEKLDICYKEEQFHKVRRNWKGLCRHCRAIE.

2 zinc fingers span residues 27–64 (CRFCQRFLTYIELVSLNRKGLQLIWTEEDFVFACCSSC) and 101–137 (CKFCLKKLDLIEKLDICYKEEQFHKVRRNWKGLCRHC).

It belongs to the papillomaviridae E6 protein family. Forms homodimers. Interacts with ubiquitin-protein ligase UBE3A/E6-AP; this interaction stimulates UBE3A ubiquitin activity. Interacts with host BAK1.

It is found in the host cytoplasm. Its subcellular location is the host nucleus. Plays a major role in the induction and maintenance of cellular transformation. E6 associates with host UBE3A/E6-AP ubiquitin-protein ligase and modulates its activity. Protects host keratinocytes from apoptosis by mediating the degradation of host BAK1. May also inhibit host immune response. The protein is Protein E6 of Human papillomavirus 15.